The following is a 150-amino-acid chain: 3-dehydroquinate dehydratase (150 aa).

Residue tyrosine 25 is the Proton acceptor of the active site. Residues asparagine 76, histidine 82, and aspartate 89 each coordinate substrate. The active-site Proton donor is the histidine 102. Substrate contacts are provided by residues leucine 103 to serine 104 and arginine 113.

Belongs to the type-II 3-dehydroquinase family. In terms of assembly, homododecamer.

The catalysed reaction is 3-dehydroquinate = 3-dehydroshikimate + H2O. It participates in metabolic intermediate biosynthesis; chorismate biosynthesis; chorismate from D-erythrose 4-phosphate and phosphoenolpyruvate: step 3/7. Functionally, catalyzes a trans-dehydration via an enolate intermediate. The sequence is that of 3-dehydroquinate dehydratase from Trichodesmium erythraeum (strain IMS101).